An 86-amino-acid chain; its full sequence is uncharacterized protein (86 aa).

2 consecutive transmembrane segments (helical) span residues 20-38 (IQFW…SVYL) and 47-63 (FSTF…TKGV). The segment at 67-86 (LSQRREQGKEQGREQGREQE) is disordered. Basic and acidic residues predominate over residues 69-86 (QRREQGKEQGREQGREQE).

The protein localises to the cell membrane. This is an uncharacterized protein from Haemophilus influenzae (strain ATCC 51907 / DSM 11121 / KW20 / Rd).